The chain runs to 291 residues: 3-hydroxy-5-phosphonooxypentane-2,4-dione thiolase (291 aa).

Catalysis depends on K203, which acts as the Schiff-base intermediate with substrate.

Belongs to the DeoC/FbaB aldolase family. In terms of assembly, homodecamer.

The protein localises to the cytoplasm. It carries out the reaction dihydroxyacetone phosphate + acetyl-CoA = 3-hydroxy-2,4-dioxopentyl phosphate + CoA. Its function is as follows. Involved in the degradation of phospho-AI-2, thereby terminating induction of the lsr operon and closing the AI-2 signaling cycle. Catalyzes the transfer of an acetyl moiety from 3-hydroxy-5-phosphonooxypentane-2,4-dione to CoA to form glycerone phosphate and acetyl-CoA. In Escherichia coli (strain K12 / DH10B), this protein is 3-hydroxy-5-phosphonooxypentane-2,4-dione thiolase.